Here is a 523-residue protein sequence, read N- to C-terminus: uncharacterized protein (523 aa).

Positions 193–447 constitute a Radical SAM core domain; the sequence is RKCSGCGNCR…ALKRRMIGKR (255 aa). Cysteine 212, cysteine 220, and cysteine 223 together coordinate [4Fe-4S] cluster.

The cofactor is [4Fe-4S] cluster.

This is an uncharacterized protein from Methanopyrus kandleri (strain AV19 / DSM 6324 / JCM 9639 / NBRC 100938).